A 113-amino-acid chain; its full sequence is UPF0122 protein MGAS10270_Spy1030 (113 aa).

Belongs to the UPF0122 family.

Functionally, might take part in the signal recognition particle (SRP) pathway. This is inferred from the conservation of its genetic proximity to ftsY/ffh. May be a regulatory protein. In Streptococcus pyogenes serotype M2 (strain MGAS10270), this protein is UPF0122 protein MGAS10270_Spy1030.